Reading from the N-terminus, the 440-residue chain is Thymidine phosphorylase (440 aa).

The protein belongs to the thymidine/pyrimidine-nucleoside phosphorylase family. Homodimer.

The catalysed reaction is thymidine + phosphate = 2-deoxy-alpha-D-ribose 1-phosphate + thymine. Its pathway is pyrimidine metabolism; dTMP biosynthesis via salvage pathway; dTMP from thymine: step 1/2. In terms of biological role, the enzymes which catalyze the reversible phosphorolysis of pyrimidine nucleosides are involved in the degradation of these compounds and in their utilization as carbon and energy sources, or in the rescue of pyrimidine bases for nucleotide synthesis. The sequence is that of Thymidine phosphorylase from Serratia proteamaculans (strain 568).